Here is a 353-residue protein sequence, read N- to C-terminus: Rhodopsin (353 aa).

Topologically, residues 1–36 (MNGTEGPYFYIPMVNTTGIVRSPYEYPQYYLVNPAA) are extracellular. N-linked (GlcNAc...) asparagine glycans are attached at residues Asn2 and Asn15. The chain crosses the membrane as a helical span at residues 37–61 (YAALGAYMFLLILVGFPVNFLTLYV). At 62 to 73 (TLEHKKLRTPLN) the chain is on the cytoplasmic side. A helical membrane pass occupies residues 74 to 96 (YILLNLAVADLFMVLGGFTTTMY). Topologically, residues 97 to 110 (TSMHGYFVLGRLGC) are extracellular. An intrachain disulfide couples Cys110 to Cys187. A helical membrane pass occupies residues 111–133 (NVEGFFATLGGEIALWSLVVLAI). A 'Ionic lock' involved in activated form stabilization motif is present at residues 134–136 (ERW). The Cytoplasmic segment spans residues 134–152 (ERWVVVCKPISNFRFSEDH). Residues 153-173 (AIMGLAFTWVMASACAVPPLV) form a helical membrane-spanning segment. Over 174–202 (GWSRYIPEGMQCSCGIDYYTRAEGFNNES) the chain is Extracellular. Asn200 carries N-linked (GlcNAc...) asparagine glycosylation. The chain crosses the membrane as a helical span at residues 203–224 (FVIYMFVCHFLIPLVVVFFCYG). The Cytoplasmic segment spans residues 225-252 (RLLCAVKEAAAAQQESETTQRAEREVSR). The chain crosses the membrane as a helical span at residues 253–274 (MVVIMVVAFLVCWCPYAGVAWY). Residues 275 to 286 (IFTHQGSEFGPL) lie on the Extracellular side of the membrane. The chain crosses the membrane as a helical span at residues 287–308 (FMTFPAFFAKSSSIYNPMIYIC). Position 296 is an N6-(retinylidene)lysine (Lys296). Over 309 to 353 (MNKQFRHCMITTLCCGKNPFEEEEGASTTSKTEASSVSSSSVSPA) the chain is Cytoplasmic. Residues Cys322 and Cys323 are each lipidated (S-palmitoyl cysteine). Positions 330–353 (EEEGASTTSKTEASSVSSSSVSPA) are disordered. A compositionally biased stretch (low complexity) spans 334–353 (ASTTSKTEASSVSSSSVSPA).

It belongs to the G-protein coupled receptor 1 family. Opsin subfamily. Post-translationally, phosphorylated on some or all of the serine and threonine residues present in the C-terminal region. Contains one covalently linked retinal chromophore.

The protein resides in the membrane. It is found in the cell projection. The protein localises to the cilium. Its subcellular location is the photoreceptor outer segment. Photoreceptor required for image-forming vision at low light intensity. While most salt water fish species use retinal as chromophore, most freshwater fish use 3-dehydroretinal, or a mixture of retinal and 3-dehydroretinal. Light-induced isomerization of 11-cis to all-trans retinal triggers a conformational change that activates signaling via G-proteins. Subsequent receptor phosphorylation mediates displacement of the bound G-protein alpha subunit by arrestin and terminates signaling. The polypeptide is Rhodopsin (rho) (Chelon labrosus (Thicklip grey mullet)).